A 213-amino-acid polypeptide reads, in one-letter code: MSQKVLPTKINLIQFRRQLRLITVIKRLLENKREVLLLYLRTYASEYEKIYNEVNEEMKKVYESYLQAVASEGISNIEEIALSQKPSLEVSSSIKVIFGVKVPTIKLDKSTIPPKPFSDVETSPYLSESYEEMTEALNKIIELVELESTIRSLVSELRKTQRLINSIDNYILPFYRGSIKFIKQILEDRQREEFSRLKIIRRILQRRRESGSG.

This sequence belongs to the V-ATPase D subunit family. Has multiple subunits with at least A(3), B(3), C, D, E, F, H, I and proteolipid K(x).

The protein resides in the cell membrane. Its function is as follows. Component of the A-type ATP synthase that produces ATP from ADP in the presence of a proton gradient across the membrane. The chain is A-type ATP synthase subunit D from Saccharolobus islandicus (strain L.S.2.15 / Lassen #1) (Sulfolobus islandicus).